The chain runs to 814 residues: Lon protease (814 aa).

Residues 1-20 are disordered; that stretch reads MANEAHNIEHTDPEFRDDSA. One can recognise a Lon N-terminal domain in the interval 25–219; that stretch reads LPLLPVRDTV…KINQHLAKEL (195 aa). 372–379 provides a ligand contact to ATP; that stretch reads GPPGVGKT. The region spanning 610 to 792 is the Lon proteolytic domain; sequence TKRAGVVVGL…DEVLEIALPS (183 aa). Active-site residues include serine 697 and lysine 740.

Belongs to the peptidase S16 family. Homohexamer. Organized in a ring with a central cavity.

The protein resides in the cytoplasm. The catalysed reaction is Hydrolysis of proteins in presence of ATP.. In terms of biological role, ATP-dependent serine protease that mediates the selective degradation of mutant and abnormal proteins as well as certain short-lived regulatory proteins. Required for cellular homeostasis and for survival from DNA damage and developmental changes induced by stress. Degrades polypeptides processively to yield small peptide fragments that are 5 to 10 amino acids long. Binds to DNA in a double-stranded, site-specific manner. This Koribacter versatilis (strain Ellin345) protein is Lon protease.